Consider the following 539-residue polypeptide: Putative serine/threonine-protein kinase L670 (539 aa).

The 115-residue stretch at Met1–His115 folds into the Cyclin N-terminal domain. The Protein kinase domain maps to Met258 to Val519. ATP is bound by residues Leu264–Val272 and Lys285. Asp375 serves as the catalytic Proton acceptor.

It belongs to the protein kinase superfamily. Ser/Thr protein kinase family.

It carries out the reaction L-seryl-[protein] + ATP = O-phospho-L-seryl-[protein] + ADP + H(+). It catalyses the reaction L-threonyl-[protein] + ATP = O-phospho-L-threonyl-[protein] + ADP + H(+). The sequence is that of Putative serine/threonine-protein kinase L670 from Acanthamoeba polyphaga mimivirus (APMV).